Consider the following 153-residue polypeptide: Putative pre-16S rRNA nuclease (153 aa).

Belongs to the YqgF nuclease family.

The protein localises to the cytoplasm. Functionally, could be a nuclease involved in processing of the 5'-end of pre-16S rRNA. The chain is Putative pre-16S rRNA nuclease from Prochlorococcus marinus (strain MIT 9215).